Reading from the N-terminus, the 205-residue chain is Meiotic nuclear division protein 1 homolog (205 aa).

The residue at position 2 (Ser2) is an N-acetylserine. Residues 84–173 are a coiled coil; the sequence is HKLEVLESQL…EAANRWTDNI (90 aa).

This sequence belongs to the MND1 family. Heterodimer with PSMC3IP/HOP2. MND1-PSMC3IP interacts with DMC1 and RAD51 and binds preferentially to dsDNA.

The protein localises to the nucleus. In terms of biological role, required for proper homologous chromosome pairing and efficient cross-over and intragenic recombination during meiosis. Stimulates both DMC1- and RAD51-mediated homologous strand assimilation, which is required for the resolution of meiotic double-strand breaks. This is Meiotic nuclear division protein 1 homolog from Homo sapiens (Human).